Reading from the N-terminus, the 537-residue chain is Mitochondrial distribution and morphology protein 34 (537 aa).

The SMP-LTD domain occupies 1 to 195 (MAFNFNWSPL…LPAIIHRLSL (195 aa)). Disordered stretches follow at residues 320-339 (YTFSDNGSQDQGSLPSRPSL), 348-403 (GLSL…IMPH), 421-493 (GRSP…DTSS), and 516-537 (KNGNPTFWDDQDDTPPPAYEAR). Over residues 355–371 (RHSKAGRKKKTRVVNLR) the composition is skewed to basic residues. A compositionally biased stretch (acidic residues) spans 378–391 (ANSEEEEDTPETDS). The segment covering 425-441 (DLQQQPRRPSFRAQATN) has biased composition (polar residues).

This sequence belongs to the MDM34 family. As to quaternary structure, component of the ER-mitochondria encounter structure (ERMES) or MDM complex, composed of MMM1, MDM10, MDM12 and MDM34.

It localises to the mitochondrion outer membrane. Its function is as follows. Component of the ERMES/MDM complex, which serves as a molecular tether to connect the endoplasmic reticulum (ER) and mitochondria. Components of this complex are involved in the control of mitochondrial shape and protein biogenesis, and function in nonvesicular lipid trafficking between the ER and mitochondria. MDM34 is required for the interaction of the ER-resident membrane protein MMM1 and the outer mitochondrial membrane-resident beta-barrel protein MDM10. The polypeptide is Mitochondrial distribution and morphology protein 34 (Chaetomium globosum (strain ATCC 6205 / CBS 148.51 / DSM 1962 / NBRC 6347 / NRRL 1970) (Soil fungus)).